Here is a 1144-residue protein sequence, read N- to C-terminus: ATP-dependent helicase/deoxyribonuclease subunit B (1144 aa).

The 276-residue stretch at 1–276 (MAIRYVFGRA…IDLDRNERPV (276 aa)) folds into the UvrD-like helicase ATP-binding domain. Residue 8–15 (GRAGRGKS) participates in ATP binding. The UvrD-like helicase C-terminal domain occupies 274 to 584 (RPVLPKVQEI…LVGSIERSKS (311 aa)). The [4Fe-4S] cluster site is built by C784, C1102, C1105, and C1111.

The protein belongs to the helicase family. AddB/RexB type 1 subfamily. Heterodimer of AddA and AddB. Mg(2+) is required as a cofactor. It depends on [4Fe-4S] cluster as a cofactor.

The heterodimer acts as both an ATP-dependent DNA helicase and an ATP-dependent, dual-direction single-stranded exonuclease. Recognizes the chi site generating a DNA molecule suitable for the initiation of homologous recombination. The AddB subunit has 5' -&gt; 3' nuclease activity but not helicase activity. The chain is ATP-dependent helicase/deoxyribonuclease subunit B from Alkaliphilus oremlandii (strain OhILAs) (Clostridium oremlandii (strain OhILAs)).